The primary structure comprises 80 residues: RNA-binding protein KhpA (80 aa).

One can recognise a KH domain in the interval 33–80; the sequence is GRTVEVHVHPDDLGKVIGRGGRTATALRTLVAGIGGRGIRVDVVDTDQ.

Belongs to the KhpA RNA-binding protein family.

The protein localises to the cytoplasm. A probable RNA-binding protein. The sequence is that of RNA-binding protein KhpA from Mycobacterium bovis (strain ATCC BAA-935 / AF2122/97).